Consider the following 255-residue polypeptide: Small ribosomal subunit protein uS2 (255 aa).

A disordered region spans residues 230-255 (QSSSGRDLGASSEVPVEPALEEAAEG).

This sequence belongs to the universal ribosomal protein uS2 family.

The chain is Small ribosomal subunit protein uS2 from Rhizobium etli (strain CIAT 652).